Reading from the N-terminus, the 100-residue chain is Replication restart protein PriB (100 aa).

The SSB domain occupies 1 to 100 (MTNRMELSGT…VLHADNITQI (100 aa)).

Belongs to the PriB family. As to quaternary structure, homodimer. Interacts with PriA and DnaT. Component of the replication restart primosome. Primosome assembly occurs via a 'hand-off' mechanism. PriA binds to replication forks, subsequently PriB then DnaT bind; DnaT then displaces ssDNA to generate the helicase loading substrate.

Its function is as follows. Involved in the restart of stalled replication forks, which reloads the replicative helicase on sites other than the origin of replication; the PriA-PriB pathway is the major replication restart pathway. During primosome assembly it facilitates complex formation between PriA and DnaT on DNA; stabilizes PriA on DNA. Stimulates the DNA unwinding activity of PriA helicase. This is Replication restart protein PriB from Vibrio parahaemolyticus serotype O3:K6 (strain RIMD 2210633).